The primary structure comprises 319 residues: Solute carrier family 25 member 34 (319 aa).

Residues 1–22 are disordered; it reads MNSAFSGPSSPTPGPSPPRPPL. Pro residues predominate over residues 10–22; it reads SPTPGPSPPRPPL. 3 Solcar repeats span residues 22–115, 119–212, and 222–313; these read LWPP…MQAA, DGPC…AKDW, and LSSL…LRQR. Transmembrane regions (helical) follow at residues 25 to 45, 63 to 83, 116 to 138, 188 to 209, 224 to 244, and 296 to 319; these read PLDFGLGALACCGACVFTNPL, SYRRLYRGVLQALWVVGRTDG, GVTDGPCCSLIAGAAAGALGAFI, VNGAVPRVMVGSATQLATFSSA, SLNTLCAAVMSGVAVSIIMTP, and LAPHTTLSMLLWDVLRQRALPYTH.

This sequence belongs to the mitochondrial carrier (TC 2.A.29) family.

The protein resides in the mitochondrion inner membrane. In Danio rerio (Zebrafish), this protein is Solute carrier family 25 member 34 (slc25a34).